The primary structure comprises 652 residues: Probable potassium transport system protein Kup (652 aa).

Low complexity predominate over residues 1–20 (MSNDTSPGTSSVDSKSSDPS). Positions 1–26 (MSNDTSPGTSSVDSKSSDPSYGVPGH) are disordered. 12 helical membrane-spanning segments follow: residues 36-56 (LSLGAIGIVFGDIGTSPLYAL), 76-96 (LVSLIFWTMGLVVTVKYVMFI), 125-145 (WLIVLGVFATALFYGDSMITP), 161-181 (PSFDSWVPPVSVVILIGLFCI), 193-213 (FGPIMLVYFATLAILGAFNII), 228-248 (AIHFFASDPLQGFWALGSVVL), 270-290 (LGWYWVVFPALTLNYLGQCAL), 314-334 (LIILATFAAVIASQAVITGAF), 362-382 (IYIPSVNWVLMFMVMVLIAMF), 391-411 (AYGIAVTGTMFITSCMMGVLV), 419-439 (AWQSIPLVSFFLLIDGAFFLS), and 444-464 (IPEGGWFPLLVGFVVFTMLMT).

Belongs to the HAK/KUP transporter (TC 2.A.72) family.

The protein resides in the cell inner membrane. It catalyses the reaction K(+)(in) + H(+)(in) = K(+)(out) + H(+)(out). Functionally, transport of potassium into the cell. Likely operates as a K(+):H(+) symporter. This chain is Probable potassium transport system protein Kup, found in Zymomonas mobilis subsp. mobilis (strain ATCC 31821 / ZM4 / CP4).